The sequence spans 389 residues: Ribonucleoside-diphosphate reductase subunit M2 (389 aa).

Serine 20 is subject to Phosphoserine. Threonine 33 is modified (phosphothreonine). A Cy motif is present at residues 49–51 (RRI). Residues aspartate 138, glutamate 169, and histidine 172 each coordinate Fe cation. Tyrosine 176 is an active-site residue. Positions 232, 266, and 269 each coordinate Fe cation.

This sequence belongs to the ribonucleoside diphosphate reductase small chain family. In terms of assembly, heterodimer of a large and a small subunit. Interacts (via Cy motif and when phosphorylated at Thr-33) with CCNF; the interaction occurs exclusively in G2 and early M. Fe cation is required as a cofactor. Post-translationally, phosphorylation on Ser-20 relieves the inhibitory effect on Wnt signaling. Phosphorylated on Thr-33 by CDK1 and CDK2; predominantly in G2 and M phase. In terms of processing, ubiquitinated by the SCF(CCNF) E3 ubiquitin-protein ligase complex; leading to its degradation by the proteasome.

The protein resides in the cytoplasm. It localises to the nucleus. The enzyme catalyses a 2'-deoxyribonucleoside 5'-diphosphate + [thioredoxin]-disulfide + H2O = a ribonucleoside 5'-diphosphate + [thioredoxin]-dithiol. In terms of biological role, provides the precursors necessary for DNA synthesis. Catalyzes the biosynthesis of deoxyribonucleotides from the corresponding ribonucleotides. Inhibits Wnt signaling. The protein is Ribonucleoside-diphosphate reductase subunit M2 (RRM2) of Homo sapiens (Human).